The chain runs to 407 residues: Formamidase (407 aa).

Homotrimer.

The catalysed reaction is formamide + H2O = formate + NH4(+). In terms of biological role, hydrolyzes formamide with the production of ammonia which can be used as a source of nitrogen for growth. Also acts, more slowly, on acetamide, propanamide and butanamide. This chain is Formamidase (fmdA), found in Methylophilus methylotrophus (Bacterium W3A1).